The primary structure comprises 421 residues: Fumarylacetoacetase (421 aa).

Asp-131 lines the Ca(2+) pocket. His-138 acts as the Proton acceptor in catalysis. A substrate-binding site is contributed by Arg-147. Ca(2+)-binding residues include Glu-204, Glu-206, and Asp-238. Asp-238 lines the Mg(2+) pocket. Substrate contacts are provided by Gln-245 and Tyr-249. The Mg(2+) site is built by Lys-258 and Thr-262. Residue Thr-355 participates in substrate binding.

The protein belongs to the FAH family. It depends on Ca(2+) as a cofactor. The cofactor is Mg(2+).

It carries out the reaction 4-fumarylacetoacetate + H2O = acetoacetate + fumarate + H(+). It participates in amino-acid degradation; L-phenylalanine degradation; acetoacetate and fumarate from L-phenylalanine: step 6/6. In terms of biological role, converts fumarylacetoacetate to acetoacetate and fumarate. Involved in tyrosine catabolic pathway. Catalyzes the final step in the tyrosine degradation pathway. In Arabidopsis thaliana (Mouse-ear cress), this protein is Fumarylacetoacetase.